Reading from the N-terminus, the 207-residue chain is Guanylate kinase (207 aa).

In terms of domain architecture, Guanylate kinase-like spans 4–184 (GTLYIVSAPS…ALSDLKTIIR (181 aa)). 11–18 (APSGAGKS) contacts ATP.

This sequence belongs to the guanylate kinase family.

It localises to the cytoplasm. The enzyme catalyses GMP + ATP = GDP + ADP. Essential for recycling GMP and indirectly, cGMP. This Yersinia pestis bv. Antiqua (strain Antiqua) protein is Guanylate kinase.